The sequence spans 289 residues: Protease HtpX homolog (289 aa).

2 helical membrane passes run 3-23 (IVGT…WFFF) and 28-48 (TILA…YKVG). His-129 provides a ligand contact to Zn(2+). Glu-130 is a catalytic residue. A Zn(2+)-binding site is contributed by His-133. The next 2 helical transmembrane spans lie at 144–164 (LGQG…LFSG) and 172–192 (FLAI…VLAI). Glu-197 contributes to the Zn(2+) binding site. A disordered region spans residues 222–250 (SQGNEQAAQQQRQRTSRGRGRRQRGQRND). Residues 235 to 246 (RTSRGRGRRQRG) are compositionally biased toward basic residues.

It belongs to the peptidase M48B family. Zn(2+) is required as a cofactor.

Its subcellular location is the cell membrane. This is Protease HtpX homolog from Halobacterium salinarum (strain ATCC 700922 / JCM 11081 / NRC-1) (Halobacterium halobium).